The primary structure comprises 89 residues: UPF0297 protein SMU_2079c (89 aa).

This sequence belongs to the UPF0297 family.

The protein is UPF0297 protein SMU_2079c of Streptococcus mutans serotype c (strain ATCC 700610 / UA159).